The following is a 367-amino-acid chain: Glutamate 5-kinase (367 aa).

Lys-10 is an ATP binding site. Substrate-binding residues include Ser-50, Asp-137, and Asn-149. ATP is bound by residues Thr-169–Asp-170 and Thr-211–Lys-217. Residues Ala-275–Glu-353 enclose the PUA domain.

It belongs to the glutamate 5-kinase family.

The protein resides in the cytoplasm. The catalysed reaction is L-glutamate + ATP = L-glutamyl 5-phosphate + ADP. It functions in the pathway amino-acid biosynthesis; L-proline biosynthesis; L-glutamate 5-semialdehyde from L-glutamate: step 1/2. Its function is as follows. Catalyzes the transfer of a phosphate group to glutamate to form L-glutamate 5-phosphate. The sequence is that of Glutamate 5-kinase from Enterobacter sp. (strain 638).